The primary structure comprises 167 residues: NADH-quinone oxidoreductase subunit B 2 (167 aa).

4 residues coordinate [4Fe-4S] cluster: Cys38, Cys39, Cys103, and Cys132.

It belongs to the complex I 20 kDa subunit family. In terms of assembly, NDH-1 is composed of 14 different subunits. Subunits NuoB, C, D, E, F, and G constitute the peripheral sector of the complex. [4Fe-4S] cluster serves as cofactor.

The protein localises to the cell inner membrane. The enzyme catalyses a quinone + NADH + 5 H(+)(in) = a quinol + NAD(+) + 4 H(+)(out). Its function is as follows. NDH-1 shuttles electrons from NADH, via FMN and iron-sulfur (Fe-S) centers, to quinones in the respiratory chain. The immediate electron acceptor for the enzyme in this species is believed to be ubiquinone. Couples the redox reaction to proton translocation (for every two electrons transferred, four hydrogen ions are translocated across the cytoplasmic membrane), and thus conserves the redox energy in a proton gradient. This Rhizobium etli (strain CIAT 652) protein is NADH-quinone oxidoreductase subunit B 2.